The following is a 95-amino-acid chain: Histone-like DNA-binding protein (95 aa).

This sequence belongs to the bacterial histone-like protein family.

The polypeptide is Histone-like DNA-binding protein (Rickettsia rickettsii).